The following is a 348-amino-acid chain: Alcohol dehydrogenase 2 (348 aa).

S2 is modified (N-acetylserine). C44, H67, C98, C101, C104, C112, and C154 together coordinate Zn(2+). NAD(+) contacts are provided by residues G178–G184, D202, K207, V269–L271, and R341.

Belongs to the zinc-containing alcohol dehydrogenase family. As to quaternary structure, homotetramer. It depends on Zn(2+) as a cofactor.

Its subcellular location is the cytoplasm. The catalysed reaction is a primary alcohol + NAD(+) = an aldehyde + NADH + H(+). The enzyme catalyses a secondary alcohol + NAD(+) = a ketone + NADH + H(+). In Kluyveromyces marxianus (Yeast), this protein is Alcohol dehydrogenase 2 (ADH2).